A 266-amino-acid polypeptide reads, in one-letter code: Putative carbamate hydrolase RutD (266 aa).

It belongs to the AB hydrolase superfamily. Hydrolase RutD family.

It catalyses the reaction carbamate + 2 H(+) = NH4(+) + CO2. Functionally, involved in pyrimidine catabolism. May facilitate the hydrolysis of carbamate, a reaction that can also occur spontaneously. This chain is Putative carbamate hydrolase RutD, found in Escherichia coli O45:K1 (strain S88 / ExPEC).